The chain runs to 145 residues: D-aminoacyl-tRNA deacylase (145 aa).

The short motif at 137–138 (GP) is the Gly-cisPro motif, important for rejection of L-amino acids element.

Belongs to the DTD family. Homodimer.

The protein localises to the cytoplasm. It catalyses the reaction glycyl-tRNA(Ala) + H2O = tRNA(Ala) + glycine + H(+). It carries out the reaction a D-aminoacyl-tRNA + H2O = a tRNA + a D-alpha-amino acid + H(+). An aminoacyl-tRNA editing enzyme that deacylates mischarged D-aminoacyl-tRNAs. Also deacylates mischarged glycyl-tRNA(Ala), protecting cells against glycine mischarging by AlaRS. Acts via tRNA-based rather than protein-based catalysis; rejects L-amino acids rather than detecting D-amino acids in the active site. By recycling D-aminoacyl-tRNA to D-amino acids and free tRNA molecules, this enzyme counteracts the toxicity associated with the formation of D-aminoacyl-tRNA entities in vivo and helps enforce protein L-homochirality. The chain is D-aminoacyl-tRNA deacylase from Stutzerimonas stutzeri (strain A1501) (Pseudomonas stutzeri).